An 868-amino-acid polypeptide reads, in one-letter code: B-cell receptor CD22 (868 aa).

The N-terminal stretch at 1–21 (MRVHYLWLLLILGHVASARYS) is a signal peptide. The region spanning 22 to 148 (SANDWTVDHP…MEPIHLNVSE (127 aa)) is the Ig-like V-type domain. The Extracellular portion of the chain corresponds to 22–708 (SANDWTVDHP…YYSPETIGKR (687 aa)). Intrachain disulfides connect Cys41–Cys177, Cys46–Cys112, and Cys171–Cys235. 2 N-linked (GlcNAc...) asparagine glycosylation sites follow: Asn111 and Asn122. N-acetylneuraminate is bound at residue Arg130. N-linked (GlcNAc...) asparagine glycans are attached at residues Asn145, Asn174, Asn271, Asn281, Asn384, Asn414, Asn466, Asn567, and Asn595. 6 consecutive Ig-like C2-type domains span residues 153–250 (PYIQ…RTVR), 257–347 (PKLE…VELT), 352–435 (PEPS…AKLD), 440–521 (PKAV…VILN), 526–603 (PRDV…ETLS), and 614–697 (PRRL…STLT). 4 cysteine pairs are disulfide-bonded: Cys278/Cys330, Cys374/Cys417, Cys463/Cys505, and Cys550/Cys592. A disulfide bridge links Cys637 with Cys680. Residues 709 to 727 (VALGLGFCLTICILAIWGM) traverse the membrane as a helical segment. The Cytoplasmic segment spans residues 728–868 (KIQKKWKQNR…EDVDYVTLKH (141 aa)). A compositionally biased stretch (polar residues) spans 738–752 (SQQGLQENSSGQSFF). The tract at residues 738–772 (SQQGLQENSSGQSFFVRNKKARRTPLSEGPQSQGC) is disordered. Phosphoserine is present on residues Ser746, Ser747, and Ser750. The ITIM motif 1 signature appears at 781–786 (VSYAIL). A Phosphotyrosine modification is found at Tyr783. The interval 790-812 (ESDTHNTGDAGTPATQAPPPNNS) is disordered. Phosphotyrosine occurs at positions 828, 843, and 863. Short sequence motifs (ITIM motif) lie at residues 841–846 (IHYSEL) and 861–866 (VDYVTL).

Belongs to the immunoglobulin superfamily. SIGLEC (sialic acid binding Ig-like lectin) family. As to quaternary structure, predominantly monomer of isoform CD22-beta. Also found as heterodimer of isoform CD22-beta and a shorter isoform. Interacts with PTPN6/SHP-1, LYN, SYK, PIK3R1/PIK3R2 and PLCG1 upon phosphorylation. Interacts with GRB2, INPP5D and SHC1 upon phosphorylation. May form a complex with INPP5D/SHIP, GRB2 and SHC1. Phosphorylated on tyrosine residues by LYN. In terms of processing, phosphorylation of Tyr-783 and Tyr-843 are involved in binding to SYK. Phosphorylation of Tyr-828 is involved in binding to GRB2. Phosphorylation of Tyr-863 is involved in binding to SYK, PLCG2 and PIK3R1/PIK3R2. In terms of tissue distribution, B-lymphocytes.

The protein localises to the cell membrane. In terms of biological role, most highly expressed siglec (sialic acid-binding immunoglobulin-like lectin) on B-cells that plays a role in various aspects of B-cell biology including differentiation, antigen presentation, and trafficking to bone marrow. Binds to alpha 2,6-linked sialic acid residues of surface molecules such as CD22 itself, CD45 and IgM in a cis configuration. Can also bind to ligands on other cells as an adhesion molecule in a trans configuration. Acts as an inhibitory coreceptor on the surface of B-cells and inhibits B-cell receptor induced signaling, characterized by inhibition of the calcium mobilization and cellular activation. Mechanistically, the immunoreceptor tyrosine-based inhibitory motif domain is phosphorylated by the Src kinase LYN, which in turn leads to the recruitment of the protein tyrosine phosphatase 1/PTPN6, leading to the negative regulation of BCR signaling. If this negative signaling from is of sufficient strength, apoptosis of the B-cell can be induced. The sequence is that of B-cell receptor CD22 from Mus musculus (Mouse).